We begin with the raw amino-acid sequence, 333 residues long: Ribonucleoside-diphosphate reductase small chain B (333 aa).

Fe cation is bound by residues D76, E107, and H110. Residue Y114 is part of the active site. Residues E169, E203, and H206 each coordinate Fe cation.

Belongs to the ribonucleoside diphosphate reductase small chain family. In terms of assembly, heterodimer of a large and a small chain. The cofactor is Fe cation. In terms of tissue distribution, expressed in roots, rosette leaves, stems and flowers.

It localises to the cytoplasm. The catalysed reaction is a 2'-deoxyribonucleoside 5'-diphosphate + [thioredoxin]-disulfide + H2O = a ribonucleoside 5'-diphosphate + [thioredoxin]-dithiol. In terms of biological role, provides the precursors necessary for DNA synthesis. Catalyzes the biosynthesis of deoxyribonucleotides from the corresponding ribonucleotides. The sequence is that of Ribonucleoside-diphosphate reductase small chain B (RNR2B) from Arabidopsis thaliana (Mouse-ear cress).